The following is a 481-amino-acid chain: Glutamate--tRNA ligase 1 (481 aa).

A 'HIGH' region motif is present at residues 11–21 (PSPTGSLHIGG). Residues 244–248 (KLSKR) carry the 'KMSKS' region motif. Residue Lys-247 participates in ATP binding.

Belongs to the class-I aminoacyl-tRNA synthetase family. Glutamate--tRNA ligase type 1 subfamily. As to quaternary structure, monomer.

It localises to the cytoplasm. It carries out the reaction tRNA(Glu) + L-glutamate + ATP = L-glutamyl-tRNA(Glu) + AMP + diphosphate. Its function is as follows. Catalyzes the attachment of glutamate to tRNA(Glu) in a two-step reaction: glutamate is first activated by ATP to form Glu-AMP and then transferred to the acceptor end of tRNA(Glu). This is Glutamate--tRNA ligase 1 from Caldanaerobacter subterraneus subsp. tengcongensis (strain DSM 15242 / JCM 11007 / NBRC 100824 / MB4) (Thermoanaerobacter tengcongensis).